Here is a 181-residue protein sequence, read N- to C-terminus: MTTITLVQGDITRQHADALVNAANSSLLGGGGVDGAIHRRGGPAILAECRALRASRYGEGLPTGRAVATTAGDLDARWVIHTVGPVWSSTEDRSDLLASCYRESLRLAGELGARTVAFPALSTGVYRWPMGDAARIAVETVRTTPTAVEEVRFVLFDTHAYDTFARELGDAGHAGHAGHPG.

A Macro domain is found at 1–172 (MTTITLVQGD…TFARELGDAG (172 aa)).

It belongs to the MacroD-type family.

The polypeptide is Macro domain-containing protein in sno 5'region (Streptomyces nogalater).